Consider the following 118-residue polypeptide: Ribonuclease P protein component (118 aa).

Belongs to the RnpA family. As to quaternary structure, consists of a catalytic RNA component (M1 or rnpB) and a protein subunit.

It carries out the reaction Endonucleolytic cleavage of RNA, removing 5'-extranucleotides from tRNA precursor.. In terms of biological role, RNaseP catalyzes the removal of the 5'-leader sequence from pre-tRNA to produce the mature 5'-terminus. It can also cleave other RNA substrates such as 4.5S RNA. The protein component plays an auxiliary but essential role in vivo by binding to the 5'-leader sequence and broadening the substrate specificity of the ribozyme. This chain is Ribonuclease P protein component, found in Vibrio vulnificus (strain CMCP6).